The primary structure comprises 501 residues: NAD(P)H-quinone oxidoreductase subunit 2, chloroplastic (501 aa).

The next 14 membrane-spanning stretches (helical) occupy residues 15 to 35 (ILPE…DLTF), 40 to 60 (TIWL…ILLF), 82 to 102 (IFQS…IEYI), 107 to 127 (MAIP…MFLC), 132 to 152 (LVTI…LCGY), 167 to 187 (LLIG…LYGL), 212 to 232 (TFIA…LVPF), 244 to 264 (PTPV…ALAT), 278 to 298 (WKIF…LVAI), 307 to 327 (LAYS…TGDL), 333 to 353 (MTIY…CIIL), 378 to 398 (FSLT…GFFG), 410 to 430 (GFYL…YYYL), and 466 to 486 (FVMI…NPIF).

The protein belongs to the complex I subunit 2 family. As to quaternary structure, NDH is composed of at least 16 different subunits, 5 of which are encoded in the nucleus.

Its subcellular location is the plastid. It localises to the chloroplast thylakoid membrane. The catalysed reaction is a plastoquinone + NADH + (n+1) H(+)(in) = a plastoquinol + NAD(+) + n H(+)(out). It catalyses the reaction a plastoquinone + NADPH + (n+1) H(+)(in) = a plastoquinol + NADP(+) + n H(+)(out). In terms of biological role, NDH shuttles electrons from NAD(P)H:plastoquinone, via FMN and iron-sulfur (Fe-S) centers, to quinones in the photosynthetic chain and possibly in a chloroplast respiratory chain. The immediate electron acceptor for the enzyme in this species is believed to be plastoquinone. Couples the redox reaction to proton translocation, and thus conserves the redox energy in a proton gradient. The polypeptide is NAD(P)H-quinone oxidoreductase subunit 2, chloroplastic (Marchantia polymorpha (Common liverwort)).